The sequence spans 733 residues: Microtubule-associated protein tau (733 aa).

Positions 1 to 16 (MADPRQEFDTMEDHAG) are enriched in basic and acidic residues. The disordered stretch occupies residues 1–548 (MADPRQEFDT…PVPMPDLKNV (548 aa)). Ala2 bears the N-acetylalanine mark. A Phosphotyrosine; by FYN modification is found at Tyr18. Lys33 is covalently cross-linked (Glycyl lysine isopeptide (Lys-Gly) (interchain with G-Cter in ubiquitin)). A phosphoserine mark is found at Ser35 and Ser50. The span at 50–60 (SETSDAKSTPT) shows a compositional bias: polar residues. Phosphothreonine is present on residues Thr58, Thr60, and Thr100. Arg115 is subject to Omega-N-methylarginine. The segment covering 126-137 (SDWTRQQVSSMS) has biased composition (polar residues). Residues 157-172 (RPEDIEKSHPASELLR) are compositionally biased toward basic and acidic residues. Ser188 carries the post-translational modification Phosphoserine. The segment covering 189-202 (EEEVDEDLTVDESS) has biased composition (acidic residues). Residues 203–212 (QDSPPSQASL) are compositionally biased toward polar residues. Composition is skewed to basic and acidic residues over residues 270–294 (EEGHEAAPEFTFHVEIKASTPKEQD) and 354–366 (ASKDRTGNDEKKA). Polar residues predominate over residues 413–427 (KHVSSVTPRNGSPGT). A Phosphothreonine modification is found at Thr445. Residue Arg447 is modified to Omega-N-methylarginine. The residue at position 451 (Ser451) is a Phosphoserine. An N6,N6-dimethyllysine; alternate modification is found at Lys455. Lys455 carries the post-translational modification N6-acetyllysine; alternate. Thr461, Thr467, and Thr468 each carry phosphothreonine. The residue at position 470 (Ser470) is a Phosphoserine. Thr473 carries the phosphothreonine modification. A phosphoserine mark is found at Ser477, Ser483, and Ser487. Positions 479–506 (EPPKSGERSGYSSPGSPGTPGSRSRTPS) are enriched in low complexity. Tyr489 is subject to Phosphotyrosine. Phosphoserine is present on residues Ser490, Ser491, and Ser494. Thr497 and Thr504 each carry phosphothreonine. Ser506 is subject to Phosphoserine. Thr509 is subject to Phosphothreonine. Lys517 carries the N6-acetyllysine modification. Position 523 is a phosphothreonine (Thr523). Phosphoserine occurs at positions 527, 529, and 531. Tau/MAP repeat units follow at residues 536 to 566 (QTAPVPMPDLKNVRSKIGSTENLKHQPGGGK), 567 to 597 (VQIINKKLDLSNVQSKCGSKDNIKHVPGGGS), 598 to 628 (VQIVYKPVDLSKVTSKCGSLGNIHHKPGGGQ), and 629 to 660 (VEVKSEKLDFKDRVQSKIGSLDNITHVPGGGN). Lys546 is covalently cross-linked (Glycyl lysine isopeptide (Lys-Gly) (interchain with G-Cter in ubiquitin)). N6-acetyllysine; alternate is present on Lys551. Lys551 carries the post-translational modification N6-methyllysine; alternate. Lys551 is covalently cross-linked (Glycyl lysine isopeptide (Lys-Gly) (interchain with G-Cter in ubiquitin); alternate). Ser554 bears the Phosphoserine; by MARK1, BRSK1, BRSK2 and PHK mark. Residue Lys559 forms a Glycyl lysine isopeptide (Lys-Gly) (interchain with G-Cter in ubiquitin) linkage. Residue Lys573 is modified to N6-acetyllysine; alternate. A Glycyl lysine isopeptide (Lys-Gly) (interchain with G-Cter in ubiquitin); alternate cross-link involves residue Lys573. Ser577 and Ser581 each carry phosphoserine. Lys582 carries the post-translational modification N6-acetyllysine. A disulfide bridge connects residues Cys583 and Cys614. Ser585 bears the Phosphoserine mark. Lys590 bears the N6-acetyllysine; alternate mark. Lys590 is covalently cross-linked (Glycyl lysine isopeptide (Lys-Gly) (interchain with G-Cter in ubiquitin); alternate). Ser597 carries the post-translational modification Phosphoserine. The residue at position 603 (Lys603) is an N6,N6-dimethyllysine; alternate. N6-acetyllysine; alternate is present on residues Lys603, Lys609, and Lys613. Residues Lys603, Lys609, and Lys613 each participate in a glycyl lysine isopeptide (Lys-Gly) (interchain with G-Cter in ubiquitin); alternate cross-link. Ser616 is modified (phosphoserine). Residues Lys623, Lys635, and Lys639 each carry the N6-acetyllysine; alternate modification. Glycyl lysine isopeptide (Lys-Gly) (interchain with G-Cter in ubiquitin); alternate cross-links involve residues Lys623, Lys635, and Lys639. Omega-N-methylarginine is present on Arg641. Ser644 carries the phosphoserine modification. Lys645 participates in a covalent cross-link: Glycyl lysine isopeptide (Lys-Gly) (interchain with G-Cter in ubiquitin). Position 648 is a phosphoserine (Ser648). An N6-acetyllysine; alternate modification is found at Lys661. Lys661 is covalently cross-linked (Glycyl lysine isopeptide (Lys-Gly) (interchain with G-Cter in ubiquitin); alternate). Lys667 is covalently cross-linked (Glycyl lysine isopeptide (Lys-Gly) (interchain with G-Cter in ubiquitin)). The residue at position 677 (Lys677) is an N6-acetyllysine; alternate. A Glycyl lysine isopeptide (Lys-Gly) (interchain with G-Cter in ubiquitin); alternate cross-link involves residue Lys677. Tyr686 carries the phosphotyrosine modification. Ser688 is modified (phosphoserine). Residues 690–709 (VVSGDTSPRHLSNVSSTGSI) are disordered. A Phosphoserine; alternate modification is found at Ser692. A glycan (O-linked (GlcNAc...) serine; alternate) is linked at Ser692. The span at 693 to 708 (GDTSPRHLSNVSSTGS) shows a compositional bias: polar residues. Residue Thr695 is modified to Phosphothreonine. Residues Ser696, Ser701, Ser708, and Ser714 each carry the phosphoserine modification. Phosphothreonine is present on Thr719.

As to quaternary structure, interacts with MARK1, MARK2, MARK3 and MARK4. Interacts with SQSTM1 when polyubiquitinated. Interacts with PSMC2 through SQSTM1. Interacts with FKBP4. Binds to CSNK1D. Interacts with SGK1. Interacts with EPM2A; the interaction dephosphorylates MAPT at Ser-369. Interacts with PIN1. Interacts with LRRK2. Interacts with LRP1, leading to endocytosis; this interaction is reduced in the presence of LRPAP1/RAP. Post-translationally, polyubiquitinated. Requires functional TRAF6 and may provoke SQSTM1-dependent degradation by the proteasome. In terms of processing, phosphorylation at various serine and threonine residues in S-P or T-P motifs by proline-directed protein kinases (PDPK1, CDK1, CDK5, GSK3, MAPK) (a few sites per protein in interphase, more in mitosis), and at serine residues in K-X-G-S motifs by MAP/microtubule affinity-regulating kinase (MARK1, MARK2, MARK3, MARK4), causing detachment from microtubules, and their disassembly. Phosphorylated by PHK. Dephosphorylation at several serine and threonine residues by the serine/threonine phosphatase PPP5C. Phosphorylation at Ser-554 by BRSK1 and BRSK2 in neurons affects ability to bind microtubules and plays a role in neuron polarization. Phosphorylation at Ser-188 by SGK1 mediates microtubule depolymerization and neurite formation in hippocampal neurons. As to expression, expressed in neurons and at a lower level in the liver and kidney. Isoform PNS-tau is expressed in the peripheral nervous system while the others are expressed in the central nervous system.

Its subcellular location is the cytoplasm. It is found in the cytosol. The protein resides in the cell membrane. It localises to the cytoskeleton. The protein localises to the cell projection. Its subcellular location is the axon. It is found in the dendrite. The protein resides in the secreted. Functionally, promotes microtubule assembly and stability, and might be involved in the establishment and maintenance of neuronal polarity. The C-terminus binds axonal microtubules while the N-terminus binds neural plasma membrane components, suggesting that tau functions as a linker protein between both. Axonal polarity is predetermined by tau localization (in the neuronal cell) in the domain of the cell body defined by the centrosome. The short isoforms allow plasticity of the cytoskeleton whereas the longer isoforms may preferentially play a role in its stabilization. The polypeptide is Microtubule-associated protein tau (Mus musculus (Mouse)).